Reading from the N-terminus, the 817-residue chain is U3 small nucleolar RNA-associated protein 13 (817 aa).

WD repeat units follow at residues 59–100, 102–139, 142–187, 191–233, 238–280, 386–425, 432–476, 489–528, 531–572, 573–614, 616–654, and 664–705; these read EDEQ…RSMK, SSPS…ITHS, GHGG…HTLQ, SAVR…KCKL, PVNQ…VLKR, GHED…CKFD, GHSA…ASMD, AHEK…LEAT, NHKR…KTLE, GHTN…KTLD, HNNR…EIEE, and EQEQ…LGES.

In terms of assembly, interacts with snoRNA U3. Interacts with MPP10. Component of the ribosomal small subunit (SSU) processome composed of at least 40 protein subunits and snoRNA U3.

It is found in the nucleus. The protein resides in the nucleolus. Its function is as follows. Involved in nucleolar processing of pre-18S ribosomal RNA. This chain is U3 small nucleolar RNA-associated protein 13 (UTP13), found in Saccharomyces cerevisiae (strain ATCC 204508 / S288c) (Baker's yeast).